The following is a 484-amino-acid chain: PTS system MurNAc-GlcNAc-specific EIIBC component (484 aa).

The 83-residue stretch at 5 to 87 folds into the PTS EIIB type-1 domain; the sequence is QQLAERIIAA…AELSGVKLGD (83 aa). C27 serves as the catalytic Phosphocysteine intermediate; for EIIB activity. The PTS EIIC type-1 domain maps to 130–484; that stretch reads KSIANIFIPL…AMRQTDLLGD (355 aa). 10 consecutive transmembrane segments (helical) span residues 135 to 155, 160 to 180, 200 to 220, 234 to 254, 274 to 294, 305 to 325, 349 to 369, 384 to 404, 408 to 428, and 450 to 470; these read IFIP…IAAV, MVAG…FNVI, FGAT…TGIA, LQPG…LSIV, IALL…AGFV, IISI…LPLV, LLPI…ALWV, ALPV…TLPL, FLTA…IGHI, and LGYI…TYLF.

Its subcellular location is the cell membrane. It carries out the reaction N-acetyl-beta-D-muramate-(1-&gt;4)-N-acetyl-D-glucosamine(out) + N(pros)-phospho-L-histidyl-[protein] = 6-phospho-N-acetyl-beta-D-muramate-(1-&gt;4)-N-acetyl-D-glucosamine(in) + L-histidyl-[protein]. Its pathway is cell wall biogenesis; peptidoglycan recycling. The phosphoenolpyruvate-dependent sugar phosphotransferase system (sugar PTS), a major carbohydrate active transport system, catalyzes the phosphorylation of incoming sugar substrates concomitantly with their translocation across the cell membrane. This system is involved in the uptake and phosphorylation of MurNAc-GlcNAc, the principle peptidoglycan turnover product of S.aureus, yielding cytoplasmic MurNAc 6P-GlcNAc. This chain is PTS system MurNAc-GlcNAc-specific EIIBC component, found in Staphylococcus aureus (strain Mu50 / ATCC 700699).